A 353-amino-acid polypeptide reads, in one-letter code: Photosystem II protein D1 (353 aa).

An N-acetylthreonine modification is found at threonine 2. Position 2 is a phosphothreonine (threonine 2). The next 3 membrane-spanning stretches (helical) occupy residues 29–46 (YIGW…TATS), 118–133 (HFLL…EWEL), and 142–156 (WIAV…AATA). Histidine 118 serves as a coordination point for chlorophyll a. Residue tyrosine 126 coordinates pheophytin a. Residues aspartate 170 and glutamate 189 each coordinate [CaMn4O5] cluster. The chain crosses the membrane as a helical span at residues 197–218 (FHMLGVAGVFGGSLFSAMHGSL). Histidine 198 is a binding site for chlorophyll a. Residues histidine 215 and 264–265 (SF) contribute to the a quinone site. A Fe cation-binding site is contributed by histidine 215. Position 272 (histidine 272) interacts with Fe cation. A helical membrane pass occupies residues 274–288 (FLAAWPVVGIWFTAL). 4 residues coordinate [CaMn4O5] cluster: histidine 332, glutamate 333, aspartate 342, and alanine 344. A propeptide spanning residues 345–353 (AIEAPSTNG) is cleaved from the precursor.

This sequence belongs to the reaction center PufL/M/PsbA/D family. In terms of assembly, PSII is composed of 1 copy each of membrane proteins PsbA, PsbB, PsbC, PsbD, PsbE, PsbF, PsbH, PsbI, PsbJ, PsbK, PsbL, PsbM, PsbT, PsbX, PsbY, PsbZ, Psb30/Ycf12, at least 3 peripheral proteins of the oxygen-evolving complex and a large number of cofactors. It forms dimeric complexes. The D1/D2 heterodimer binds P680, chlorophylls that are the primary electron donor of PSII, and subsequent electron acceptors. It shares a non-heme iron and each subunit binds pheophytin, quinone, additional chlorophylls, carotenoids and lipids. D1 provides most of the ligands for the Mn4-Ca-O5 cluster of the oxygen-evolving complex (OEC). There is also a Cl(-1) ion associated with D1 and D2, which is required for oxygen evolution. The PSII complex binds additional chlorophylls, carotenoids and specific lipids. is required as a cofactor. Post-translationally, tyr-161 forms a radical intermediate that is referred to as redox-active TyrZ, YZ or Y-Z. In terms of processing, C-terminally processed by CTPA; processing is essential to allow assembly of the oxygen-evolving complex and thus photosynthetic growth.

The protein resides in the plastid. Its subcellular location is the chloroplast thylakoid membrane. It catalyses the reaction 2 a plastoquinone + 4 hnu + 2 H2O = 2 a plastoquinol + O2. Its function is as follows. Photosystem II (PSII) is a light-driven water:plastoquinone oxidoreductase that uses light energy to abstract electrons from H(2)O, generating O(2) and a proton gradient subsequently used for ATP formation. It consists of a core antenna complex that captures photons, and an electron transfer chain that converts photonic excitation into a charge separation. The D1/D2 (PsbA/PsbD) reaction center heterodimer binds P680, the primary electron donor of PSII as well as several subsequent electron acceptors. This is Photosystem II protein D1 from Nicotiana debneyi (Debney's tobacco).